The primary structure comprises 119 residues: Basic phospholipase A2 homolog 1 (119 aa).

Disulfide bonds link cysteine 11–cysteine 72, cysteine 27–cysteine 118, cysteine 29–cysteine 45, cysteine 44–cysteine 99, cysteine 51–cysteine 92, cysteine 61–cysteine 85, and cysteine 79–cysteine 90. The interval 107–117 is important for membrane-damaging activities in eukaryotes and bacteria; heparin-binding; it reads KENYNIDPKKR.

This sequence belongs to the phospholipase A2 family. Group I subfamily. D49 sub-subfamily. In terms of tissue distribution, expressed by the venom gland.

It localises to the secreted. The protein is Basic phospholipase A2 homolog 1 of Notechis scutatus scutatus (Mainland tiger snake).